Consider the following 546-residue polypeptide: Thermolysin (546 aa).

The first 25 residues, 1 to 25 (MDKRAMLGAIGLAFGLMAWPFGASA), serve as a signal peptide directing secretion. Positions 26–228 (KEKSMVWNEQ…EAKPGGGQPV (203 aa)) are cleaved as a propeptide — activation peptide. Asp287, Asp289, Gln291, and Asp368 together coordinate Ca(2+). His372 contacts Zn(2+). Glu373 is an active-site residue. Zn(2+)-binding residues include His376 and Glu396. Ca(2+) contacts are provided by Asn413, Asp415, Glu417, Glu420, Tyr423, Thr424, Ile427, and Asp430. The Proton donor role is filled by His461.

Belongs to the peptidase M4 family. Ca(2+) is required as a cofactor. It depends on Zn(2+) as a cofactor.

It localises to the secreted. It carries out the reaction Preferential cleavage: Xaa-|-Leu &gt; Xaa-|-Phe.. Extracellular zinc metalloprotease. The protein is Thermolysin (npr) of Bacillus caldolyticus.